The following is a 122-amino-acid chain: Large ribosomal subunit protein uL14 (122 aa).

It belongs to the universal ribosomal protein uL14 family. In terms of assembly, part of the 50S ribosomal subunit. Forms a cluster with proteins L3 and L19. In the 70S ribosome, L14 and L19 interact and together make contacts with the 16S rRNA in bridges B5 and B8.

Binds to 23S rRNA. Forms part of two intersubunit bridges in the 70S ribosome. This chain is Large ribosomal subunit protein uL14, found in Mycoplasma capricolum subsp. capricolum (strain California kid / ATCC 27343 / NCTC 10154).